The following is a 267-amino-acid chain: MTEYNWNERHIITFPEETLALATKDLHVYYGAKEAIKGIDMQFEKHKITALIGPSGCGKSTYLRSLNRMNDTIDIARVTGEILYQGIDVNRKDMNVYEIRKHLGMVFQRPNPFAKSIYKNITFAHERAGVKDKKVLDEIVETSLKQAALWDQVKDDLHKSAFTLSGGQQQRLCIARAISVKPDILLMDEPASALDPIATMQLEETMFELKKNYTIIIVTHNMQQAARASDYTAFFYLGNLIEYDKTRNIFQNAQCQSTNDYVSGHFG.

One can recognise an ABC transporter domain in the interval L21 to V262. ATP is bound at residue G53–S60.

This sequence belongs to the ABC transporter superfamily. Phosphate importer (TC 3.A.1.7) family. As to quaternary structure, the complex is composed of two ATP-binding proteins (PstB), two transmembrane proteins (PstC and PstA) and a solute-binding protein (PstS).

It is found in the cell membrane. It carries out the reaction phosphate(out) + ATP + H2O = ADP + 2 phosphate(in) + H(+). Its function is as follows. Part of the ABC transporter complex PstSACB involved in phosphate import. Responsible for energy coupling to the transport system. This Streptococcus pyogenes serotype M1 protein is Phosphate import ATP-binding protein PstB 2.